Reading from the N-terminus, the 119-residue chain is C-C motif chemokine 24 (119 aa).

The signal sequence occupies residues 1–26 (MAGSATIVAGLLLLVACACCIFPIDS). Intrachain disulfides connect cysteine 33/cysteine 58 and cysteine 34/cysteine 74. 2 N-linked (GlcNAc...) asparagine glycosylation sites follow: asparagine 54 and asparagine 115. The interval 96–119 (PSKGAKAVRTKFAVQRRRGNSTEV) is disordered. A compositionally biased stretch (basic residues) spans 101–119 (KAVRTKFAVQRRRGNSTEV).

The protein belongs to the intercrine beta (chemokine CC) family. Highest expression in jejunum and spleen. Lower levels found in liver and lung. No expression detected in kidney, thymus, brain or testis.

The protein resides in the secreted. In terms of biological role, chemotactic for resting T-lymphocytes, and eosinophils. Has lower chemotactic activity for neutrophils but none for monocytes and activated lymphocytes. Is a strong suppressor of colony formation by a multipotential hematopoietic progenitor cell line. Binds to CCR3. The sequence is that of C-C motif chemokine 24 from Mus musculus (Mouse).